The primary structure comprises 227 residues: MTMTSTTTKAMAMAAAVLAAAAVAATNAQTCGKQNDGMICPHNLCCSQFGYCGLGRDYCGTGCQSGACCSSQRCGSQGGGATCSNNQCCSQYGYCGFGSEYCGSGCQNGPCRADIKCGSNANGELCPNNMCCSQWGYCGLGSEFCGNGCQSGACCPEKRCGKQAGGDKCPNNFCCSAGGYCGLGGNYCGSGCQSGGCYKGGDGMAAILANNQSVSFEGIIESVAELV.

The first 28 residues, 1-28, serve as a signal peptide directing secretion; that stretch reads MTMTSTTTKAMAMAAAVLAAAAVAATNA. Glutamine 29 carries the post-translational modification Pyrrolidone carboxylic acid. Chitin-binding type-1 domains lie at 29–70, 71–113, 114–156, and 157–199; these read QTCG…ACCS, SQRC…PCRA, DIKC…ACCP, and EKRC…GCYK. Intrachain disulfides connect cysteine 31-cysteine 46, cysteine 40-cysteine 52, cysteine 45-cysteine 59, cysteine 63-cysteine 68, cysteine 74-cysteine 89, cysteine 83-cysteine 95, cysteine 88-cysteine 102, cysteine 106-cysteine 111, cysteine 117-cysteine 132, cysteine 126-cysteine 138, cysteine 131-cysteine 145, cysteine 149-cysteine 154, cysteine 160-cysteine 175, cysteine 169-cysteine 181, cysteine 174-cysteine 188, and cysteine 192-cysteine 197. 38–40 provides a ligand contact to substrate; the sequence is MIC. A substrate-binding site is contributed by 90-101; it reads SQYGYCGFGSEY. 142–143 serves as a coordination point for substrate; that stretch reads SE. Positions 202–227 are excised as a propeptide; it reads DGMAAILANNQSVSFEGIIESVAELV. Asparagine 211 carries an N-linked (GlcNAc...) asparagine glycan.

N-acetyl-D-glucosamine binding lectin. This is Lectin from Oryza sativa subsp. indica (Rice).